We begin with the raw amino-acid sequence, 638 residues long: 1-deoxy-D-xylulose-5-phosphate synthase (638 aa).

Thiamine diphosphate is bound by residues His-72 and 113-115; that span reads GHA. Position 144 (Asp-144) interacts with Mg(2+). Thiamine diphosphate-binding positions include 145–146, Asn-174, Tyr-287, and Glu-370; that span reads GA. Asn-174 provides a ligand contact to Mg(2+).

The protein belongs to the transketolase family. DXPS subfamily. In terms of assembly, homodimer. Requires Mg(2+) as cofactor. Thiamine diphosphate is required as a cofactor.

The catalysed reaction is D-glyceraldehyde 3-phosphate + pyruvate + H(+) = 1-deoxy-D-xylulose 5-phosphate + CO2. Its pathway is metabolic intermediate biosynthesis; 1-deoxy-D-xylulose 5-phosphate biosynthesis; 1-deoxy-D-xylulose 5-phosphate from D-glyceraldehyde 3-phosphate and pyruvate: step 1/1. Catalyzes the acyloin condensation reaction between C atoms 2 and 3 of pyruvate and glyceraldehyde 3-phosphate to yield 1-deoxy-D-xylulose-5-phosphate (DXP). The polypeptide is 1-deoxy-D-xylulose-5-phosphate synthase (Thermosynechococcus vestitus (strain NIES-2133 / IAM M-273 / BP-1)).